We begin with the raw amino-acid sequence, 352 residues long: O(6)-methylguanine-induced apoptosis 2 (352 aa).

7 STPGR repeats span residues 80–90 (NPGPGAYNVAR), 124–139 (PAPN…FSKK), 165–171 (PAPNQYS), 205–235 (GPSP…KTSR), 244–263 (NPGP…KKII), 286–295 (PGPGHYDIVD), and 325–335 (LPGPGAYHPEI).

It belongs to the STPG1 family.

The protein resides in the cytoplasm. It is found in the nucleus. Functionally, may positively contribute to the induction of apoptosis triggered by O(6)-methylguanine. This chain is O(6)-methylguanine-induced apoptosis 2 (stpg1), found in Xenopus laevis (African clawed frog).